We begin with the raw amino-acid sequence, 90 residues long: UPF0367 protein PMT9312_0127 (90 aa).

It belongs to the UPF0367 family.

The chain is UPF0367 protein PMT9312_0127 from Prochlorococcus marinus (strain MIT 9312).